The primary structure comprises 1348 residues: MMVLEGASALSPFRRARLETRLQTLVPALRITGAWHVYFIRPEAGQSPDQATLQRILQANAAPAERDADASSRYVVPRLGTLSPWSSKATELVRGAGQPIQRVERGTRIDLAGWPDDASAQAAVAKLLHDPMTQSLLGSAAAAEALFNVPDPGQLRRVPLDGLEQANRDLGLALAQDEIDYLRERFGALGRDPADVELMMFAQANSEHCRHKIFNATWTIDGKPQERSLFRMIKHTHQQTPQHTLSAYSDNAAVVEGVPAARYRPDPATGQYRSEAVLPSAFAIKVETHNHPTAIAPFPGAATGAGGEIRDEGATGRGGKPKAGLTGFSVSHLRIPTLPQPWEAPRALNPRMAPALDIMLDGPLGGAAFNNEFGRPNLLGYFRSFELAEGPGLTRAYDKPIMLAGGLGAIDRNQVEKLRLQPGDAVIVLGGPAMLIGLGGGAASSVAAGDSAEALDFASVQRENPEMERRCQEVIDRCVALGVDNPIRWFHDVGAGGLSNAIPELLHDSGVGGIIDLGRVLTDDPSLSPLELWCNESQERYVLGVPQARLEEFAAICARERCPFAAVGVATAEERLVVGYGVLDAGNRESGVGNRNGTLVAADTASHHSPFPTRDSQLPIDLPMDVLFGKAPKMHRDAAHPGAPQWPVLQTASLDLQQAGLRVLAHPTVASKSFLVTIGDRSVGGLTAREQMIGPWQLPLADCAITLAGFDTFEGEAMSIGERTPLALLNAAASARMAVGEAITNLCAAPVQTLDSIKLSANWMAAAGHSGEDALLYDAVRAIGMELCPALELSVPVGKDSLSMQAQWQVGNRESGIGNGETPQPSASTIPDSPFPIPGETLKSVSPVSLIISAFAPVGDVRTQLTPLLRSGEESELWLIGLGGGKQRLGGSVLAQVYADDTALPAFGGEVPDLDDAQRLRSFFELIRDARDSGLLLAYHDRSDGGAFAALCEMAFASRQGLDITLDAWGDDAFRSLFNEELGAVVQIASEDRAAFADLVERHALTECAQRIARPTGTPRIRVSGQGRVLAEWRWEELFDAWWSVTHAMQKLRDNPDSADEERALARDFKASGLRPKLVFDPSDDVAAPFVATGTRPKVAILREQGVNGQIEMAYNFERAGFRPYDVHMSDLIEGRVDLSAFVGFAACGGFSYGDVLGAGRGWATSILERSALRDAFAAFFARSDTFALGVCNGCQMLSQLKDIIPGAEHWPRFLRNRSEQFEARTALLEVVESPSIFLRGMAGSRIPVAVAHGEGRAEFDSAVDQAAARVALRYIDGDGAVASQYPLNPNGSPDGITGLTSSDGRVTILMPHPERTPRSANLSWYPVDWGDDSPWLRMFRNARVWCG.

Residues 300-311 (GAATGAGGEIRD) and alanine 701 contribute to the ATP site. Residues aspartate 702, glutamate 741, asparagine 745, and aspartate 941 each coordinate Mg(2+). Residue serine 943 coordinates ATP. A Glutamine amidotransferase type-1 domain is found at 1099 to 1348 (VAILREQGVN…MFRNARVWCG (250 aa)). The Nucleophile role is filled by cysteine 1192. Catalysis depends on residues histidine 1313 and glutamate 1315.

This sequence in the N-terminal section; belongs to the FGAMS family. In terms of assembly, monomer.

The protein localises to the cytoplasm. The enzyme catalyses N(2)-formyl-N(1)-(5-phospho-beta-D-ribosyl)glycinamide + L-glutamine + ATP + H2O = 2-formamido-N(1)-(5-O-phospho-beta-D-ribosyl)acetamidine + L-glutamate + ADP + phosphate + H(+). It functions in the pathway purine metabolism; IMP biosynthesis via de novo pathway; 5-amino-1-(5-phospho-D-ribosyl)imidazole from N(2)-formyl-N(1)-(5-phospho-D-ribosyl)glycinamide: step 1/2. In terms of biological role, phosphoribosylformylglycinamidine synthase involved in the purines biosynthetic pathway. Catalyzes the ATP-dependent conversion of formylglycinamide ribonucleotide (FGAR) and glutamine to yield formylglycinamidine ribonucleotide (FGAM) and glutamate. This chain is Phosphoribosylformylglycinamidine synthase, found in Xanthomonas axonopodis pv. citri (strain 306).